The sequence spans 252 residues: tRNA (guanine-N(1)-)-methyltransferase (252 aa).

Residues G118 and 138–143 each bind S-adenosyl-L-methionine; that span reads IGDYVL.

Belongs to the RNA methyltransferase TrmD family. Homodimer.

Its subcellular location is the cytoplasm. The enzyme catalyses guanosine(37) in tRNA + S-adenosyl-L-methionine = N(1)-methylguanosine(37) in tRNA + S-adenosyl-L-homocysteine + H(+). Specifically methylates guanosine-37 in various tRNAs. This Pseudomonas aeruginosa (strain UCBPP-PA14) protein is tRNA (guanine-N(1)-)-methyltransferase.